The chain runs to 441 residues: Homogentisate 1,2-dioxygenase (441 aa).

Histidine 287 functions as the Proton acceptor in the catalytic mechanism. Fe cation-binding residues include histidine 330 and glutamate 336. Residues tyrosine 345 and histidine 366 each contribute to the homogentisate site. Fe cation is bound at residue histidine 366.

The protein belongs to the homogentisate dioxygenase family. Hexamer; dimer of trimers. Fe cation is required as a cofactor.

It catalyses the reaction homogentisate + O2 = 4-maleylacetoacetate + H(+). It functions in the pathway amino-acid degradation; L-phenylalanine degradation; acetoacetate and fumarate from L-phenylalanine: step 4/6. In terms of biological role, involved in the catabolism of homogentisate (2,5-dihydroxyphenylacetate or 2,5-OH-PhAc), a central intermediate in the degradation of phenylalanine and tyrosine. Catalyzes the oxidative ring cleavage of the aromatic ring of homogentisate to yield maleylacetoacetate. The polypeptide is Homogentisate 1,2-dioxygenase (Xanthomonas oryzae pv. oryzae (strain KACC10331 / KXO85)).